Reading from the N-terminus, the 426-residue chain is Adenylosuccinate synthetase (426 aa).

GTP-binding positions include 12 to 18 (GDEGKGK) and 40 to 42 (GHT). The Proton acceptor role is filled by Asp-13. The Mg(2+) site is built by Asp-13 and Gly-40. IMP is bound by residues 13–16 (DEGK), 38–41 (NAGH), Thr-128, Arg-142, Gln-223, Thr-238, and Arg-302. The active-site Proton donor is His-41. 298-304 (TTTGRAR) provides a ligand contact to substrate. GTP is bound by residues Arg-304, 330–332 (KLD), and 412–414 (SVG).

This sequence belongs to the adenylosuccinate synthetase family. As to quaternary structure, homodimer. Mg(2+) serves as cofactor.

The protein resides in the cytoplasm. It carries out the reaction IMP + L-aspartate + GTP = N(6)-(1,2-dicarboxyethyl)-AMP + GDP + phosphate + 2 H(+). The protein operates within purine metabolism; AMP biosynthesis via de novo pathway; AMP from IMP: step 1/2. Functionally, plays an important role in the de novo pathway of purine nucleotide biosynthesis. Catalyzes the first committed step in the biosynthesis of AMP from IMP. The chain is Adenylosuccinate synthetase from Thermoanaerobacter pseudethanolicus (strain ATCC 33223 / 39E) (Clostridium thermohydrosulfuricum).